A 602-amino-acid chain; its full sequence is UvrABC system protein C (602 aa).

A GIY-YIG domain is found at 17 to 94 (TTSGCYKMYS…IKEYKPDYNI (78 aa)). A UVR domain is found at 199-234 (SKLLDETEIKMKEAIKKEDFEAAIKLKETKRSLIEI).

The protein belongs to the UvrC family. In terms of assembly, interacts with UvrB in an incision complex.

The protein localises to the cytoplasm. Its function is as follows. The UvrABC repair system catalyzes the recognition and processing of DNA lesions. UvrC both incises the 5' and 3' sides of the lesion. The N-terminal half is responsible for the 3' incision and the C-terminal half is responsible for the 5' incision. This chain is UvrABC system protein C, found in Borrelia hermsii (strain HS1 / DAH).